The chain runs to 248 residues: 1,2-phenylacetyl-CoA epoxidase, subunit C (248 aa).

Residues 76 to 79 (QFSN) and 177 to 179 (IAL) contribute to the substrate site.

In terms of assembly, forms a stable heterotetramer (dimer of heterodimers) with PaaA and a stable heterodimer with PaaB.

Its pathway is aromatic compound metabolism; phenylacetate degradation. Its function is as follows. Component of 1,2-phenylacetyl-CoA epoxidase multicomponent enzyme system which catalyzes the reduction of phenylacetyl-CoA (PA-CoA) to form 1,2-epoxyphenylacetyl-CoA. The subunit C may be essential for structural integrity of the alpha subunit. The chain is 1,2-phenylacetyl-CoA epoxidase, subunit C (paaC) from Escherichia coli (strain K12).